Consider the following 250-residue polypeptide: Ribosomal RNA small subunit methyltransferase J (250 aa).

Residues 96–97 (RD) and Asp168 contribute to the S-adenosyl-L-methionine site.

Belongs to the methyltransferase superfamily. RsmJ family.

The protein resides in the cytoplasm. It catalyses the reaction guanosine(1516) in 16S rRNA + S-adenosyl-L-methionine = N(2)-methylguanosine(1516) in 16S rRNA + S-adenosyl-L-homocysteine + H(+). Specifically methylates the guanosine in position 1516 of 16S rRNA. This chain is Ribosomal RNA small subunit methyltransferase J, found in Neisseria gonorrhoeae (strain ATCC 700825 / FA 1090).